Here is a 242-residue protein sequence, read N- to C-terminus: Protein unc-119 homolog B-A (242 aa).

The segment covering 1 to 20 has biased composition (basic and acidic residues); it reads MSGSKREAALTGQPKDERKK. Residues 1-49 form a disordered region; it reads MSGSKREAALTGQPKDERKKSGGGVINRLKARRVQGKESGTSDQSSVTP. The span at 38-48 shows a compositional bias: polar residues; the sequence is ESGTSDQSSVT. Residue Tyr-133 coordinates tetradecanoate.

The protein belongs to the PDE6D/unc-119 family.

Functionally, myristoyl-binding protein that acts as a cargo adapter: specifically binds the myristoyl moiety of a subset of N-terminally myristoylated proteins and is required for their localization. Plays a key role in localization of proteins to the primary cilium membrane. This chain is Protein unc-119 homolog B-A (unc119b-a), found in Xenopus laevis (African clawed frog).